Reading from the N-terminus, the 247-residue chain is Triosephosphate isomerase (247 aa).

2 residues coordinate substrate: N10 and K12. H94 serves as the catalytic Electrophile. Residue E164 is the Proton acceptor of the active site.

It belongs to the triosephosphate isomerase family. Homodimer.

It carries out the reaction D-glyceraldehyde 3-phosphate = dihydroxyacetone phosphate. It functions in the pathway carbohydrate biosynthesis; gluconeogenesis. It participates in carbohydrate degradation; glycolysis; D-glyceraldehyde 3-phosphate from glycerone phosphate: step 1/1. This is Triosephosphate isomerase (Tpi) from Drosophila melanogaster (Fruit fly).